The primary structure comprises 490 residues: POC1 centriolar protein homolog B (490 aa).

WD repeat units follow at residues 16-55, 58-97, 100-139, 142-181, 184-223, 226-265, and 268-307; these read GHKD…RAFR, GHTD…ESTV, AHTA…FLYS, RHTN…CINI, DYGG…LIQH, VHNA…LIYT, and GHKG…LNYR. Positions 375–388 are enriched in polar residues; it reads DGASSSRAQFTSGM. The disordered stretch occupies residues 375 to 427; sequence DGASSSRAQFTSGMDSGPFRTHTQAREEEDENQEERFAGGMTASPAERSGIPS. Positions 431-463 form a coiled coil; sequence STLENIVQQLDILTQTVAVLEERLTLTEDKLRT.

It belongs to the WD repeat POC1 family.

Its subcellular location is the cytoplasm. It localises to the cytoskeleton. The protein resides in the microtubule organizing center. The protein localises to the centrosome. It is found in the centriole. Functionally, plays an important role in centriole assembly and/or stability and ciliogenesis. Involved in early steps of centriole duplication, as well as in the later steps of centriole length control. In Danio rerio (Zebrafish), this protein is POC1 centriolar protein homolog B.